A 468-amino-acid polypeptide reads, in one-letter code: Ammonium transporter Amt2 (468 aa).

The next 12 membrane-spanning stretches (helical) occupy residues 1–21 (MVGR…TAGA), 39–59 (FVWA…FAML), 77–97 (LMDF…LMMG), 123–143 (LWFF…GSIA), 156–176 (AVVS…GGWL), 194–214 (FAGS…AVML), 236–256 (LAFA…FNAG), 268–288 (IIAS…MAIT), 297–317 (VGMT…PCAW), 321–341 (WSSV…YWWL), 350–370 (VGAI…LGIF), and 400–420 (LISA…LFWI).

Belongs to the ammonia transporter channel (TC 1.A.11.2) family. As to quaternary structure, homotrimer.

Its subcellular location is the cell membrane. In terms of biological role, involved in the uptake of ammonium/ammonia (NH(4)(+)/NH(3)). Transport is electrogenic. In Archaeoglobus fulgidus (strain ATCC 49558 / DSM 4304 / JCM 9628 / NBRC 100126 / VC-16), this protein is Ammonium transporter Amt2.